The primary structure comprises 426 residues: Glutamate-1-semialdehyde 2,1-aminomutase (426 aa).

Lysine 265 bears the N6-(pyridoxal phosphate)lysine mark.

This sequence belongs to the class-III pyridoxal-phosphate-dependent aminotransferase family. HemL subfamily. In terms of assembly, homodimer. Requires pyridoxal 5'-phosphate as cofactor.

It localises to the cytoplasm. The enzyme catalyses (S)-4-amino-5-oxopentanoate = 5-aminolevulinate. It participates in porphyrin-containing compound metabolism; protoporphyrin-IX biosynthesis; 5-aminolevulinate from L-glutamyl-tRNA(Glu): step 2/2. The chain is Glutamate-1-semialdehyde 2,1-aminomutase from Actinobacillus pleuropneumoniae serotype 3 (strain JL03).